The chain runs to 95 residues: Co-chaperonin GroES (95 aa).

This sequence belongs to the GroES chaperonin family. In terms of assembly, heptamer of 7 subunits arranged in a ring. Interacts with the chaperonin GroEL.

The protein localises to the cytoplasm. Together with the chaperonin GroEL, plays an essential role in assisting protein folding. The GroEL-GroES system forms a nano-cage that allows encapsulation of the non-native substrate proteins and provides a physical environment optimized to promote and accelerate protein folding. GroES binds to the apical surface of the GroEL ring, thereby capping the opening of the GroEL channel. In Caldicellulosiruptor bescii (strain ATCC BAA-1888 / DSM 6725 / KCTC 15123 / Z-1320) (Anaerocellum thermophilum), this protein is Co-chaperonin GroES.